Consider the following 1486-residue polypeptide: Rap guanine nucleotide exchange factor 2 (1486 aa).

Disordered stretches follow at residues 40–59 (HVSSSHSGCSITSDSGSSSL) and 68–101 (SEAGDMDLSGLPETAVDSEDDDDEEDIERASDPL). Residues 83 to 94 (VDSEDDDDEEDI) are compositionally biased toward acidic residues. 135-252 (AFANMTMSVR…QKVEEEGEIV (118 aa)) lines the a nucleoside 3',5'-cyclic phosphate pocket. Positions 267 to 380 (KGHIVIKGTS…RLLNIACAAK (114 aa)) constitute an N-terminal Ras-GEF domain. The PDZ domain maps to 385–468 (LMTLTKPARE…LSITVKTNLF (84 aa)). S501 bears the Phosphoserine mark. Positions 606-692 (PDQVLRVFKA…GRYYLKNNME (87 aa)) constitute a Ras-associating domain. Phosphothreonine is present on T644. In terms of domain architecture, Ras-GEF spans 717-944 (STVEVATQLS…SQGSTNATVL (228 aa)). Phosphoserine is present on residues S806, S930, S933, and S1022. Residues 1002–1049 (PATNTLPKNPTDKKPVKSETSPVAPRAGLQPKAQPQPQPPQPPHKLNQ) form a disordered region. The span at 1035–1044 (QPQPQPPQPP) shows a compositional bias: pro residues. Phosphoserine occurs at positions 1077, 1086, 1092, 1113, 1117, 1156, and 1173. 4 disordered regions span residues 1090-1176 (EGSL…SVSI), 1221-1254 (PSTEELSQDQGDRASLDAADSGRGSWTSCSSGSH), 1303-1357 (KYSR…DSSS), and 1391-1486 (GRYR…VSAV). 2 stretches are compositionally biased toward low complexity: residues 1105–1122 (SNTSSQLSSPPTSPQSSP) and 1138–1159 (SDSGHSEISSRSSIVSNSSFDS). 2 stretches are compositionally biased toward polar residues: residues 1244–1254 (GSWTSCSSGSH) and 1304–1328 (YSRQSQSRESLDQAQSRASWASSTG). The span at 1475 to 1486 (AEEDEDEQVSAV) shows a compositional bias: acidic residues.

It belongs to the RAPGEF2 family. In terms of assembly, found in a complex, at least composed of KIDINS220, MAGI2, NTRK1 and RAPGEF2; the complex is mainly formed at late endosomes in a neuronal growth factor (NGF)-dependent manner. Interacts (via C-terminal domain) with NEDD4 (via WW domains); this interaction leads to ubiquitination and degradation via the proteasome pathway in a cAMP-independent manner. Interacts with MAGI1 (via PDZ domain). Interacts with ADRB1 (via C-terminal PDZ motif); the interaction is direct. Interacts (via Ras-associating domain) with RAP1A (via GTP-bound active form). Interacts weakly with HRAS (via GDP- and GTP-bound forms). Interacts (via C-terminal domain) with MAGI2 (via PDZ and WW domains). Interacts with CDH1 and TJP1. Interacts with CTNNB1. Post-translationally, ubiquitinated by NEDD4, leading to proteasomal degradation. In terms of processing, phosphorylation by PLK2 promotes its activity.

The protein localises to the cytoplasm. Its subcellular location is the perinuclear region. It localises to the cell membrane. It is found in the late endosome. The protein resides in the cell junction. Functions as a guanine nucleotide exchange factor (GEF), which activates Rap and Ras family of small GTPases by exchanging bound GDP for free GTP in a cAMP-dependent manner. Serves as a link between cell surface receptors and Rap/Ras GTPases in intracellular signaling cascades. Also acts as an effector for Rap1 by direct association with Rap1-GTP thereby leading to the amplification of Rap1-mediated signaling. Shows weak activity on HRAS. It is controversial whether RAPGEF2 binds cAMP and cGMP or not. Its binding to ligand-activated beta-1 adrenergic receptor ADRB1 leads to the Ras activation through the G(s)-alpha signaling pathway. Involved in the cAMP-induced Ras and Erk1/2 signaling pathway that leads to sustained inhibition of long term melanogenesis by reducing dendrite extension and melanin synthesis. Also provides inhibitory signals for cell proliferation of melanoma cells and promotes their apoptosis in a cAMP-independent nanner. Regulates cAMP-induced neuritogenesis by mediating the Rap1/B-Raf/ERK signaling through a pathway that is independent on both PKA and RAPGEF3/RAPGEF4. Involved in neuron migration and in the formation of the major forebrain fiber connections forming the corpus callosum, the anterior commissure and the hippocampal commissure during brain development. Involved in neuronal growth factor (NGF)-induced sustained activation of Rap1 at late endosomes and in brain-derived neurotrophic factor (BDNF)-induced axon outgrowth of hippocampal neurons. Plays a role in the regulation of embryonic blood vessel formation and in the establishment of basal junction integrity and endothelial barrier function. May be involved in the regulation of the vascular endothelial growth factor receptor KDR and cadherin CDH5 expression at allantois endothelial cell-cell junctions. Binds to cAMP. This chain is Rap guanine nucleotide exchange factor 2 (RAPGEF2), found in Bos taurus (Bovine).